A 536-amino-acid polypeptide reads, in one-letter code: SNW domain-containing protein 1 (536 aa).

Residues 1–46 are disordered; the sequence is MALTSFLPAPTQLSQDQLEAEEKARSQRSRQTSLVSSRREPPPYGY. Residue alanine 2 is modified to N-acetylalanine. Serine 14 is modified (phosphoserine). Residue lysine 23 forms a Glycyl lysine isopeptide (Lys-Gly) (interchain with G-Cter in SUMO2) linkage. The interval 59 to 79 is interaction with PPIL1; sequence GDGGAFPEIHVAQYPLDMGRK. Glycyl lysine isopeptide (Lys-Gly) (interchain with G-Cter in SUMO2) cross-links involve residues lysine 81, lysine 97, lysine 115, lysine 122, lysine 141, lysine 158, and lysine 170. Residues 174–339 are SNW; the sequence is AQYIRYTPSQ…KARERRAGIK (166 aa). A phosphoserine mark is found at serine 182 and serine 190. Residue lysine 193 forms a Glycyl lysine isopeptide (Lys-Gly) (interchain with G-Cter in SUMO2) linkage. The segment at 209-233 is disordered; sequence PPRFKINKKIPRGPPSPPAPVMHSP. 3 positions are modified to phosphoserine: serine 224, serine 232, and serine 234. Glycyl lysine isopeptide (Lys-Gly) (interchain with G-Cter in SUMO2) cross-links involve residues lysine 240, lysine 258, lysine 286, lysine 339, lysine 344, lysine 416, lysine 441, and lysine 452. The interval 311–386 is disordered; that stretch reads KMAQKEKEKH…RSKLQRNENR (76 aa). Basic and acidic residues-rich tracts occupy residues 472 to 489 and 503 to 530; these read FVPD…RGRE and KFLE…EHEG. A disordered region spans residues 472–536; that stretch reads FVPDKEFSGS…EHEGKKRRKE (65 aa). Phosphoserine occurs at positions 479 and 481. A Glycyl lysine isopeptide (Lys-Gly) (interchain with G-Cter in SUMO2) cross-link involves residue lysine 509.

This sequence belongs to the SNW family. Identified in the spliceosome C complex. Associates with U4/U6-U5 tri-small nuclear ribonucleoproteins (U4/U6-U5 tri-snRNPs). Component of the minor spliceosome, which splices U12-type introns. Interacts with SKI, SMAD2,SMAD3, RBPJ, RB1, PABPN1, MAGEA1, SIRT1, FOXN3, U2AF2, PPIL1, DAXX and ATP1B4. Interacts with VDR and RXRA; preferentially associates with VDR:RXRA heterodimers. Interacts with NCOR2. Interacts with MAML1. Interacts with NOTCH1 NICD; the interaction involves multimerized NOTCH1 NICD. Forms a complex with NOTCH1 NICD and MAML1; the association is dissociated by RBPJ. Associates with positive transcription elongation factor b (P-TEFb). Component of the SNARP complex which consists at least of SNIP1, SNW1, THRAP3, BCLAF1 and PNN.

The protein localises to the nucleus. Functionally, involved in pre-mRNA splicing as component of the spliceosome. As a component of the minor spliceosome, involved in the splicing of U12-type introns in pre-mRNAs. Required in the specific splicing of CDKN1A pre-mRNA; the function probably involves the recruitment of U2AF2 to the mRNA. May recruit PPIL1 to the spliceosome. May be involved in cyclin-D1/CCND1 mRNA stability through the SNARP complex which associates with both the 3'end of the CCND1 gene and its mRNA. Involved in transcriptional regulation. Modulates TGF-beta-mediated transcription via association with SMAD proteins, MYOD1-mediated transcription via association with PABPN1, RB1-mediated transcriptional repression, and retinoid-X receptor (RXR)- and vitamin D receptor (VDR)-dependent gene transcription in a cell line-specific manner probably involving coactivators NCOA1 and GRIP1. Is involved in NOTCH1-mediated transcriptional activation. Binds to multimerized forms of Notch intracellular domain (NICD) and is proposed to recruit transcriptional coactivators such as MAML1 to form an intermediate preactivation complex which associates with DNA-bound CBF-1/RBPJ to form a transcriptional activation complex by releasing SNW1 and redundant NOTCH1 NICD. This chain is SNW domain-containing protein 1 (SNW1), found in Bos taurus (Bovine).